Reading from the N-terminus, the 155-residue chain is SsrA-binding protein (155 aa).

This sequence belongs to the SmpB family.

It localises to the cytoplasm. In terms of biological role, required for rescue of stalled ribosomes mediated by trans-translation. Binds to transfer-messenger RNA (tmRNA), required for stable association of tmRNA with ribosomes. tmRNA and SmpB together mimic tRNA shape, replacing the anticodon stem-loop with SmpB. tmRNA is encoded by the ssrA gene; the 2 termini fold to resemble tRNA(Ala) and it encodes a 'tag peptide', a short internal open reading frame. During trans-translation Ala-aminoacylated tmRNA acts like a tRNA, entering the A-site of stalled ribosomes, displacing the stalled mRNA. The ribosome then switches to translate the ORF on the tmRNA; the nascent peptide is terminated with the 'tag peptide' encoded by the tmRNA and targeted for degradation. The ribosome is freed to recommence translation, which seems to be the essential function of trans-translation. The chain is SsrA-binding protein from Streptococcus pneumoniae serotype 4 (strain ATCC BAA-334 / TIGR4).